The chain runs to 327 residues: Phenylalanine--tRNA ligase alpha subunit (327 aa).

Glu-252 is a binding site for Mg(2+).

The protein belongs to the class-II aminoacyl-tRNA synthetase family. Phe-tRNA synthetase alpha subunit type 1 subfamily. In terms of assembly, tetramer of two alpha and two beta subunits. The cofactor is Mg(2+).

It localises to the cytoplasm. The enzyme catalyses tRNA(Phe) + L-phenylalanine + ATP = L-phenylalanyl-tRNA(Phe) + AMP + diphosphate + H(+). This chain is Phenylalanine--tRNA ligase alpha subunit, found in Yersinia pestis bv. Antiqua (strain Antiqua).